Consider the following 330-residue polypeptide: Beta-ketoacyl-[acyl-carrier-protein] synthase III (330 aa).

Residues cysteine 111 and histidine 249 contribute to the active site. An ACP-binding region spans residues 250-254; the sequence is QANTR. Asparagine 279 is an active-site residue.

This sequence belongs to the thiolase-like superfamily. FabH family. In terms of assembly, homodimer.

Its subcellular location is the cytoplasm. The enzyme catalyses malonyl-[ACP] + acetyl-CoA + H(+) = 3-oxobutanoyl-[ACP] + CO2 + CoA. Its pathway is lipid metabolism; fatty acid biosynthesis. Functionally, catalyzes the condensation reaction of fatty acid synthesis by the addition to an acyl acceptor of two carbons from malonyl-ACP. Catalyzes the first condensation reaction which initiates fatty acid synthesis and may therefore play a role in governing the total rate of fatty acid production. Possesses both acetoacetyl-ACP synthase and acetyl transacylase activities. Its substrate specificity determines the biosynthesis of branched-chain and/or straight-chain of fatty acids. In Pseudomonas aeruginosa (strain LESB58), this protein is Beta-ketoacyl-[acyl-carrier-protein] synthase III.